A 595-amino-acid chain; its full sequence is P2X purinoceptor 7 (595 aa).

Topologically, residues methionine 1 to glutamine 22 are cytoplasmic. Cysteine 4 is lipidated: S-palmitoyl cysteine. Residues serine 23 to valine 46 form a helical membrane-spanning segment. Over serine 47–phenylalanine 328 the chain is Extracellular. The N-linked (GlcNAc...) asparagine glycan is linked to asparagine 74. 3 disulfide bridges follow: cysteine 119/cysteine 168, cysteine 129/cysteine 152, and cysteine 135/cysteine 162. Residues arginine 125 and arginine 133 each carry the ADP-ribosylarginine; by ART2B modification. The N-linked (GlcNAc...) asparagine glycan is linked to asparagine 187. Threonine 189 serves as a coordination point for ATP. Residues asparagine 202 and asparagine 213 are each glycosylated (N-linked (GlcNAc...) asparagine). Cysteine 216 and cysteine 226 form a disulfide bridge. Asparagine 241 carries N-linked (GlcNAc...) asparagine glycosylation. Cysteine 260 and cysteine 269 are oxidised to a cystine. Positions 294 and 311 each coordinate ATP. Residues aspartate 329–leucine 353 traverse the membrane as a helical segment. Na(+) is bound at residue serine 342. Residues leucine 354 to tyrosine 595 are Cytoplasmic-facing. The interval serine 360–cysteine 377 is C-cys anchor. S-palmitoyl cysteine attachment occurs at residues cysteine 363, cysteine 374, and cysteine 377. Residue serine 390 is modified to Phosphoserine. The interval lysine 395–tyrosine 595 is cytoplasmic ballast. The Zn(2+) site is built by cysteine 479, cysteine 499, and cysteine 506. The GTP site is built by arginine 546, histidine 547, tyrosine 550, and alanine 567. Cysteine 572 serves as a coordination point for Zn(2+). Residues lysine 583, serine 589, and glycine 590 each contribute to the GTP site.

It belongs to the P2X receptor family. In terms of assembly, homotrimers. Interacts with LAMA3, ITGB2, ACTB, ACTN4, SVIL, MPP3, HSPA1, HSPCB, HSPA8, PIK230 and PTPRB. Interacts (via C-terminus) with EMP2. In terms of processing, phosphorylation results in its inactivation. ADP-ribosylation at Arg-125 is necessary and sufficient to activate P2RX7 and gate the channel. Post-translationally, palmitoylation of several cysteines in the C-terminal cytoplasmic tail is required for efficient localization to cell surface. Palmitoylation prevents channel desensitization by physically anchoring the palmitoylated groups to the membrane.

Its subcellular location is the cell membrane. The enzyme catalyses Ca(2+)(in) = Ca(2+)(out). The catalysed reaction is K(+)(in) = K(+)(out). It carries out the reaction Na(+)(in) = Na(+)(out). With respect to regulation, activated by high extracellular ATP levels (0.1-2.5 mM). The synthetic analog 2'(3')-O-(4-benzoylbenzoyl)ATP (BzATP) acts as a potent agonist. Does not undergo desensitization, instead, undergoes a facilitation process where currents progressively increase with repetitive or prolonged agonist application. Palmitoylation prevents channel desensitization. The permeability of the P2RX7 channel is modulated by the amount of cholesterol in the plasma membrane. ATP-gated nonselective transmembrane cation channel. Requires high millimolar-range concentrations of ATP to become activated. ATP binding trigers the rapid opening of the channel and allows Na(+) and Ca(2+) influx and K(+) efflux. Has also the ability to form a large pore in the cell membrane, allowing the passage of large cationic molecules. In microglia, may mediate NADPH transport across the plasma membrane. In immune cells, P2RX7 acts as a molecular sensor in pathological inflammatory states by detecting and responding to high local concentrations of extracellar ATP. In microglial cells, P2RX7 activation leads to the release of pro-inflammatory cytokines, such as IL-1beta and IL-18, through the activation of the NLRP3 inflammasome and caspase-1. Cooperates with KCNK6 to activate NLRP3 inflammasome. Activates death pathways leading to apoptosis and autophagy. Activates death pathways leading to pyroptosis. The protein is P2X purinoceptor 7 (P2rx7) of Mus musculus (Mouse).